A 247-amino-acid chain; its full sequence is Proteasome subunit alpha type-7 (247 aa).

The protein belongs to the peptidase T1A family. As to quaternary structure, the 26S proteasome consists of a 20S proteasome core and two 19S regulatory subunits. The 20S proteasome core is composed of 28 subunits that are arranged in four stacked rings, resulting in a barrel-shaped structure. The two end rings are each formed by seven alpha subunits, and the two central rings are each formed by seven beta subunits. The catalytic chamber with the active sites is on the inside of the barrel.

The protein resides in the cytoplasm. It localises to the nucleus. In terms of biological role, the proteasome is a multicatalytic proteinase complex which is characterized by its ability to cleave peptides with Arg, Phe, Tyr, Leu, and Glu adjacent to the leaving group at neutral or slightly basic pH. The proteasome has an ATP-dependent proteolytic activity. The chain is Proteasome subunit alpha type-7 (PSA4) from Trypanosoma brucei brucei.